Consider the following 20-residue polypeptide: Methyl-coenzyme M reductase subunit gamma (20 aa).

A disordered region spans residues 1 to 20 (AYERQFYPGATSVAENNIGH).

Belongs to the methyl-coenzyme M reductase gamma subunit family. In terms of assembly, MCR from M.thermophila is a heterotrimer composed of an alpha, a beta, and a gamma subunit. Coenzyme F430 is required as a cofactor.

It localises to the cytoplasm. It catalyses the reaction coenzyme B + methyl-coenzyme M = methane + coenzyme M-coenzyme B heterodisulfide. It participates in one-carbon metabolism; methyl-coenzyme M reduction; methane from methyl-coenzyme M: step 1/1. Its function is as follows. Component of the methyl-coenzyme M reductase (MCR) I that catalyzes the reductive cleavage of methyl-coenzyme M (CoM-S-CH3 or 2-(methylthio)ethanesulfonate) using coenzyme B (CoB or 7-mercaptoheptanoylthreonine phosphate) as reductant which results in the production of methane and the mixed heterodisulfide of CoB and CoM (CoM-S-S-CoB). This is the final step in methanogenesis. This is Methyl-coenzyme M reductase subunit gamma from Methanosarcina thermophila.